The chain runs to 71 residues: MGLSDKINSKSDEAVGAAKEKIGGLTDDSDLKSAGADQKASGKVAQKVEDVKDKANDLKHNVQAAADKLKG.

Residues 20–46 (EKIGGLTDDSDLKSAGADQKASGKVAQ) form a disordered region.

This sequence belongs to the UPF0337 (CsbD) family.

The chain is UPF0337 protein PPA1427 from Cutibacterium acnes (strain DSM 16379 / KPA171202) (Propionibacterium acnes).